Reading from the N-terminus, the 718-residue chain is Threonine--tRNA ligase, mitochondrial (718 aa).

Serine 52 carries the phosphoserine modification. Residues 55 to 121 enclose the TGS domain; it reads QKEPRTIKIS…ETDSDLRFLT (67 aa).

It belongs to the class-II aminoacyl-tRNA synthetase family. Homodimer.

The protein resides in the mitochondrion matrix. The enzyme catalyses tRNA(Thr) + L-threonine + ATP = L-threonyl-tRNA(Thr) + AMP + diphosphate + H(+). Catalyzes the attachment of threonine to tRNA(Thr) in a two-step reaction: threonine is first activated by ATP to form Thr-AMP and then transferred to the acceptor end of tRNA(Thr). Also edits incorrectly charged tRNA(Thr) via its editing domain. This chain is Threonine--tRNA ligase, mitochondrial (TARS2), found in Homo sapiens (Human).